Here is a 327-residue protein sequence, read N- to C-terminus: uncharacterized protein (327 aa).

Positions 129 to 306 (TPLQNQEATT…DNKKTVTTSS (178 aa)) are disordered. Residues 130–144 (PLQNQEATTSPTIES) show a composition bias toward polar residues. 2 stretches are compositionally biased toward basic and acidic residues: residues 184–196 (KSVE…DRNV) and 233–276 (TKDE…EKIV).

This is an uncharacterized protein from Caenorhabditis elegans.